Here is a 233-residue protein sequence, read N- to C-terminus: uncharacterized protein (233 aa).

The HTH gntR-type domain occupies 16–84; the sequence is KTLAKQVIER…TRGGTYFNDK (69 aa). The segment at residues 44 to 63 is a DNA-binding region (H-T-H motif); sequence EMELMDILHVSRPVLREALS.

This is an uncharacterized protein from Bacillus subtilis (strain 168).